A 369-amino-acid polypeptide reads, in one-letter code: ERCC4 domain-containing protein EP364R (369 aa).

The region spanning 3–101 is the ERCC4 domain; the sequence is FLVADHREHH…QLYFFVEGPA (99 aa). A disordered region spans residues 339–369; that stretch reads PLHDVSDDASSDASSPTGHQTLSKEMSLNTA. The segment covering 354–369 has biased composition (polar residues); the sequence is PTGHQTLSKEMSLNTA.

The protein belongs to the asfivirus EP364R family.

Its function is as follows. Plays a role in the inhibition of type I interferon signaling pathway. Mechanistically, specifically interacts with 2',3'-cGAMP and cleaves it via its phosphodiesterase activity. In turn, prevents 2',3'-cGAMP interaction with host ER-resident STING1 leading to inhibition of downstream signaling pathway and type I interferon production. The chain is ERCC4 domain-containing protein EP364R from African swine fever virus (isolate Tick/South Africa/Pretoriuskop Pr4/1996) (ASFV).